Here is a 465-residue protein sequence, read N- to C-terminus: UDP-N-acetylmuramate--L-alanine ligase (465 aa).

ATP is bound at residue G112–T118.

Belongs to the MurCDEF family.

It is found in the cytoplasm. The catalysed reaction is UDP-N-acetyl-alpha-D-muramate + L-alanine + ATP = UDP-N-acetyl-alpha-D-muramoyl-L-alanine + ADP + phosphate + H(+). It functions in the pathway cell wall biogenesis; peptidoglycan biosynthesis. Functionally, cell wall formation. The sequence is that of UDP-N-acetylmuramate--L-alanine ligase from Burkholderia vietnamiensis (strain G4 / LMG 22486) (Burkholderia cepacia (strain R1808)).